The following is a 329-amino-acid chain: 4-hydroxy-3-methylbut-2-enyl diphosphate reductase (329 aa).

Cys-27 is a binding site for [4Fe-4S] cluster. (2E)-4-hydroxy-3-methylbut-2-enyl diphosphate is bound by residues His-56 and His-89. 2 residues coordinate dimethylallyl diphosphate: His-56 and His-89. His-56 and His-89 together coordinate isopentenyl diphosphate. Cys-111 lines the [4Fe-4S] cluster pocket. His-139 is a (2E)-4-hydroxy-3-methylbut-2-enyl diphosphate binding site. His-139 contacts dimethylallyl diphosphate. His-139 provides a ligand contact to isopentenyl diphosphate. The Proton donor role is filled by Glu-141. Thr-179 serves as a coordination point for (2E)-4-hydroxy-3-methylbut-2-enyl diphosphate. Cys-209 is a binding site for [4Fe-4S] cluster. The (2E)-4-hydroxy-3-methylbut-2-enyl diphosphate site is built by Ser-237, Ser-238, Asn-239, and Ser-281. 4 residues coordinate dimethylallyl diphosphate: Ser-237, Ser-238, Asn-239, and Ser-281. Residues Ser-237, Ser-238, Asn-239, and Ser-281 each contribute to the isopentenyl diphosphate site.

Belongs to the IspH family. It depends on [4Fe-4S] cluster as a cofactor.

The catalysed reaction is isopentenyl diphosphate + 2 oxidized [2Fe-2S]-[ferredoxin] + H2O = (2E)-4-hydroxy-3-methylbut-2-enyl diphosphate + 2 reduced [2Fe-2S]-[ferredoxin] + 2 H(+). It catalyses the reaction dimethylallyl diphosphate + 2 oxidized [2Fe-2S]-[ferredoxin] + H2O = (2E)-4-hydroxy-3-methylbut-2-enyl diphosphate + 2 reduced [2Fe-2S]-[ferredoxin] + 2 H(+). It functions in the pathway isoprenoid biosynthesis; dimethylallyl diphosphate biosynthesis; dimethylallyl diphosphate from (2E)-4-hydroxy-3-methylbutenyl diphosphate: step 1/1. The protein operates within isoprenoid biosynthesis; isopentenyl diphosphate biosynthesis via DXP pathway; isopentenyl diphosphate from 1-deoxy-D-xylulose 5-phosphate: step 6/6. Catalyzes the conversion of 1-hydroxy-2-methyl-2-(E)-butenyl 4-diphosphate (HMBPP) into a mixture of isopentenyl diphosphate (IPP) and dimethylallyl diphosphate (DMAPP). Acts in the terminal step of the DOXP/MEP pathway for isoprenoid precursor biosynthesis. The polypeptide is 4-hydroxy-3-methylbut-2-enyl diphosphate reductase (Methylibium petroleiphilum (strain ATCC BAA-1232 / LMG 22953 / PM1)).